A 730-amino-acid polypeptide reads, in one-letter code: GTPase-activating protein GYP7 (730 aa).

Positions 434 to 619 (VQEDKERDDF…RLWEVLWTDY (186 aa)) constitute a Rab-GAP TBC domain.

Functionally, most effectively accelerate the intrinsic GTPase activity of YPT7. It is also active, but to a lesser extent, on YPT31, YPT32 and YPT1. YPT6 and SEC4. This Yarrowia lipolytica (strain CLIB 122 / E 150) (Yeast) protein is GTPase-activating protein GYP7 (GYP7).